The sequence spans 173 residues: T-cell surface glycoprotein CD3 gamma chain (173 aa).

The signal sequence occupies residues 1-22 (MEQGKHLAGLILAVFLLQGTMA). Topologically, residues 23–111 (HVKEVKVDDN…NCIELNPSTV (89 aa)) are extracellular. The Ig-like domain occupies 24-94 (VKEVKVDDNR…GSNNQSKSLQ (71 aa)). Cys-42 and Cys-83 are disulfide-bonded. 2 N-linked (GlcNAc...) asparagine glycosylation sites follow: Asn-45 and Asn-88. A helical transmembrane segment spans residues 112-132 (AGFIFTEIVSIFLLAVGVYFI). Residues 133 to 173 (AGQEGVRQSRASDKQTLLNNDQLYQPLKEREDDQYSHLRKN) lie on the Cytoplasmic side of the membrane. A Phosphoserine modification is found at Ser-141. Ser-144 carries the phosphoserine; by PKC modification. Positions 145 to 173 (DKQTLLNNDQLYQPLKEREDDQYSHLRKN) constitute an ITAM domain. The Di-leucine motif motif lies at 149–150 (LL).

In terms of assembly, the TCR-CD3 complex is composed of a CD3D/CD3E and a CD3G/CD3E heterodimers that preferentially associate with TCRalpha and TCRbeta, respectively, to form TCRalpha/CD3E/CD3G and TCRbeta/CD3G/CD3E trimers. In turn, the hexamer interacts with CD3Z homodimer to form the TCR-CD3 complex. Alternatively, TCRalpha and TCRbeta can be replaced by TCRgamma and TCRdelta. Post-translationally, phosphorylated on Tyr residues after T-cell receptor triggering by LCK in association with CD4/CD8. Phosphorylated also by PKC; leading to the TCR complex down-regulation. Phosphorylated on Tyr residues after T-cell receptor triggering by LCK in association with CD4/CD8.

The protein resides in the cell membrane. Functionally, part of the TCR-CD3 complex present on T-lymphocyte cell surface that plays an essential role in adaptive immune response. When antigen presenting cells (APCs) activate T-cell receptor (TCR), TCR-mediated signals are transmitted across the cell membrane by the CD3 chains CD3D, CD3E, CD3G and CD3Z. All CD3 chains contain immunoreceptor tyrosine-based activation motifs (ITAMs) in their cytoplasmic domain. Upon TCR engagement, these motifs become phosphorylated by Src family protein tyrosine kinases LCK and FYN, resulting in the activation of downstream signaling pathways. In addition to this role of signal transduction in T-cell activation, CD3G plays an essential role in the dynamic regulation of TCR expression at the cell surface. Indeed, constitutive TCR cycling is dependent on the di-leucine-based (diL) receptor-sorting motif present in CD3G. This chain is T-cell surface glycoprotein CD3 gamma chain (CD3G), found in Bos taurus (Bovine).